Consider the following 24-residue polypeptide: Brevinin-1PTa (24 aa).

Cysteine 18 and cysteine 24 form a disulfide bridge.

Expressed by the skin glands.

It is found in the secreted. Functionally, has antibacterial activity against the Gram-positive bacterium S.aureus ATCC 25923 (MIC=3 uM) and the Gram-negative bacterium E.coli ATCC 25726 (MIC=24 uM). This Pulchrana picturata (Malaysian fire frog) protein is Brevinin-1PTa.